The chain runs to 353 residues: Polyadenylate-binding protein-interacting protein 10 (353 aa).

Residues 1-61 form a disordered region; it reads MAVAENAGVK…IDSTPETDDR (61 aa). The span at 20–31 shows a compositional bias: low complexity; that stretch reads NNNTAASATETT. The short motif at 96–106 is the PAM2-like element; sequence KLNPMAQEFVP. Positions 128-159 are disordered; that stretch reads AAPPKLADGNDHFPRRRRSFGQGKRRMNKRTS. A compositionally biased stretch (basic residues) spans 141–156; that stretch reads PRRRRSFGQGKRRMNK. The short motif at 142 to 153 is the Bipartite nuclear localization signal element; it reads RRRRSFGQGKRR. RRM domains lie at 169–244 and 266–341; these read RTVY…PSKT.

Expressed in cauline leaves, stems, rosette leaves, immature siliques and primary inflorescences.

It localises to the nucleus. The sequence is that of Polyadenylate-binding protein-interacting protein 10 (CID10) from Arabidopsis thaliana (Mouse-ear cress).